We begin with the raw amino-acid sequence, 80 residues long: Large ribosomal subunit protein bL31B (80 aa).

This sequence belongs to the bacterial ribosomal protein bL31 family. Type B subfamily. Part of the 50S ribosomal subunit.

This is Large ribosomal subunit protein bL31B from Xylella fastidiosa (strain 9a5c).